The chain runs to 201 residues: E3 ubiquitin-protein ligase MIR1 (201 aa).

An RING-CH-type zinc finger spans residues 1–58 (MDSTGEFCWICHQPEGPLKRFCGCKGSCAVSHQDCLRGWLETSRRQTCALCGTPYSMK). Topologically, residues 1–81 (MDSTGEFCWI…EEVLAAMEAC (81 aa)) are cytoplasmic. Positions 8, 11, 22, 24, 32, 35, 48, and 51 each coordinate Zn(2+). Residues 52–79 (GTPYSMKWKTKPLREWTWGEEEVLAAME) are DIRT. The helical transmembrane segment at 82–102 (LPLVLIPLAVLMIVMGTWLLV) threads the bilayer. Topologically, residues 103–113 (NHNGFLSPRMQ) are extracellular. The helical transmembrane segment at 114-134 (VVLVVIVLLAMIVFSASASYV) threads the bilayer. The Cytoplasmic segment spans residues 135–201 (MVEGPGCLDT…RLGCVRLCCV (67 aa)).

Interacts with host UBE2J2.

It is found in the host endoplasmic reticulum membrane. The enzyme catalyses [E2 ubiquitin-conjugating enzyme]-S-ubiquitinyl-L-cysteine + [acceptor protein]-L-cysteine = [E2 ubiquitin-conjugating enzyme]-L-cysteine + [acceptor protein]-S-ubiquitinyl-L-cysteine.. The protein operates within protein modification; protein ubiquitination. In terms of biological role, E3 ubiquitin-protein ligase that mediates ubiquitination of host surface class I (MHC-I) H-2D(b)/H2-D1 and H-2K(b)/H2-K1 molecules before they exit the endoplasmic reticulum, leading to their degradation by the endoplasmic reticulum-associated degradation (ERAD) system, thus blocking the immune detection of virus-infected cells. Mediates ubiquitination of lysine, as well as serine and threonine residues present in the cytoplasmic tail of surface class I molecules. Promotes ubiquitination of hydroxylated serine or threonine residues via ester bonds instead of the classical isopeptide linkage. This is E3 ubiquitin-protein ligase MIR1 (K3) from Murid herpesvirus 4 (MuHV-4).